The following is a 581-amino-acid chain: MRHCDSFCELIPMKGCEAILEWMIDQGAGREPADIVLKGGRFLDLITGELVESDIAICEDRIVGTFGTYRGKHEIDVSGRIVVPGFIDTHLHIASSQVTPHEFDRCVLPQGVTTAICDPHEIANVLGAEGIRFFLDSALETVMDIRVQLSSCVPATHMETSGAELLIDDLLPFADHPKVIGLAEFMNFPGVLAKDPECMAKLRAFQGRHIDGHAPLLRGLDLNGYIAAGIRTEHEATNAEEALEKLRKGMYVLVREGSVSKDLKALMPIITERHAQFLALCTDDRNPLDIADQGHLDYLIRTAIAGGVEPLAIYRAASVSAARVFGLFDRGLVAPGQRADLVVVDSLEGCHAEIVLSAGRVVSEALFAARKPVAEVGRNSVKAPRVTASNFRSQSNSGKTRAIGIVPGKIITQNLEFDLKVGPNGVEPDLERDVVKVAVIERHGKNGNIATGFVHGFGLKAGAIASTVSHDSHNICVVGASDEDIATAANRLGEIEGGFVVVRDGKVLAEIPLPIAGLMSTEPYETVREALRKLRHAAEDLGSVLEEPFLQLAFIALPVIPHLKITDRGLVDVDKFEFVGN.

Belongs to the metallo-dependent hydrolases superfamily. Adenine deaminase family. Mn(2+) is required as a cofactor.

It carries out the reaction adenine + H2O + H(+) = hypoxanthine + NH4(+). This is Adenine deaminase from Brucella melitensis biotype 1 (strain ATCC 23456 / CCUG 17765 / NCTC 10094 / 16M).